Here is a 344-residue protein sequence, read N- to C-terminus: Calcium homeostasis modulator protein 3 (344 aa).

At 1–20 the chain is on the cytoplasmic side; that stretch reads MDKFRMLFQHFQSSSESVMN. A central pore region spans residues 9 to 36; that stretch reads QHFQSSSESVMNGICLLLAAVTVKLYSS. A helical transmembrane segment spans residues 21 to 36; that stretch reads GICLLLAAVTVKLYSS. Residues 37-48 lie on the Extracellular side of the membrane; it reads FDFNCPCLVHYN. 2 disulfide bridges follow: Cys-41–Cys-126 and Cys-43–Cys-157. Residues 49-71 form a helical membrane-spanning segment; sequence ALYGLGLLLTPPLALFLCGLLAN. Residues 72 to 98 lie on the Cytoplasmic side of the membrane; sequence RQSVVMVEEWRRPAGHRRKDPGIIRYM. A lipid anchor (S-palmitoyl cysteine) is attached at Cys-99. Residues 99–124 form a helical membrane-spanning segment; sequence CSSVLQRALAAPLVWILLALLDGKCF. The Extracellular portion of the chain corresponds to 125–176; it reads VCAFSSSVDPEKFLDFANMTPSQVQLFLAKVPCKEDELVRDSPARKAVSRYL. An N-linked (GlcNAc...) asparagine glycan is attached at Asn-142. A helical membrane pass occupies residues 177–202; it reads RCLSQAIGWSVTLLLIIAAFLARCLR. S-palmitoyl cysteine attachment occurs at residues Cys-200 and Cys-204. Residues 203–344 are Cytoplasmic-facing; that stretch reads PCFDQTVFLQ…GTRLSQHTDV (142 aa).

This sequence belongs to the CALHM family. Associates with CALHM1 as a pore-forming subunit in a hetero-hexameric channel complex. Post-translationally, N-glycosylated. Palmitoylated by ZDHHC3 and ZDHHC15. Palmitoylation positively regulates CALHM1:CALHM3 channel conductance. In terms of tissue distribution, specifically expressed in circumvallate taste bud cells.

The protein resides in the basolateral cell membrane. The catalysed reaction is ATP(in) = ATP(out). It carries out the reaction Ca(2+)(in) = Ca(2+)(out). The enzyme catalyses Na(+)(in) = Na(+)(out). It catalyses the reaction K(+)(in) = K(+)(out). The catalysed reaction is chloride(in) = chloride(out). Pore-forming subunit of gustatory voltage-gated ion channels required for sensory perception of sweet, bitter and umami tastes. With CALHM1 forms a fast-activating voltage-gated ATP-release channel in type II taste bud cells, ATP acting as a neurotransmitter to activate afferent neural gustatory pathways. Acts both as a voltage-gated and calcium-activated ion channel: mediates neuronal excitability in response to membrane depolarization and low extracellular Ca(2+) concentration. Has poor ion selectivity and forms a wide pore (around 14 Angstroms) that mediates permeation of small ions including Ca(2+), Na(+), K(+) and Cl(-), as well as larger ions such as ATP(4-). The chain is Calcium homeostasis modulator protein 3 from Homo sapiens (Human).